A 169-amino-acid polypeptide reads, in one-letter code: Macro domain-containing protein SCO6450 (169 aa).

The region spanning 1 to 169 (MTGITLVQGD…AYEAFAARLG (169 aa)) is the Macro domain.

The protein belongs to the MacroD-type family.

This Streptomyces coelicolor (strain ATCC BAA-471 / A3(2) / M145) protein is Macro domain-containing protein SCO6450.